The primary structure comprises 941 residues: Glycine dehydrogenase (decarboxylating) (941 aa).

Lys692 is modified (N6-(pyridoxal phosphate)lysine).

The protein belongs to the GcvP family. As to quaternary structure, the glycine cleavage system is composed of four proteins: P, T, L and H. It depends on pyridoxal 5'-phosphate as a cofactor.

The enzyme catalyses N(6)-[(R)-lipoyl]-L-lysyl-[glycine-cleavage complex H protein] + glycine + H(+) = N(6)-[(R)-S(8)-aminomethyldihydrolipoyl]-L-lysyl-[glycine-cleavage complex H protein] + CO2. The glycine cleavage system catalyzes the degradation of glycine. The P protein binds the alpha-amino group of glycine through its pyridoxal phosphate cofactor; CO(2) is released and the remaining methylamine moiety is then transferred to the lipoamide cofactor of the H protein. This is Glycine dehydrogenase (decarboxylating) from Mycobacterium bovis (strain ATCC BAA-935 / AF2122/97).